The following is a 1074-amino-acid chain: DNA annealing helicase and endonuclease ZRANB3 (1074 aa).

A Helicase ATP-binding domain is found at 46 to 208 (TFALRRDGRC…FMQIEALFPQ (163 aa)). Positions 46–481 (TFALRRDGRC…GRKEKLQAEE (436 aa)) are DNA annealing helicase activity. 59 to 66 (DEMGLGKT) serves as a coordination point for ATP. The DEAH box motif lies at 157-160 (DESH). Residues 325–481 (AVKDYIKMML…GRKEKLQAEE (157 aa)) form the Helicase C-terminal domain. Residues 519 to 526 (QRDIRSFF) carry the PIP-box motif. A Phosphoserine modification is found at serine 566. The RanBP2-type zinc finger occupies 617-647 (FCGEGWQCAFCTYINNSVLPYCEMCENPRGG). Residues 659–719 (QNKNKNEKDD…RLTPQPGDEQ (61 aa)) form a disordered region. Basic and acidic residues-rich tracts occupy residues 662–674 (NKNE…DTSK) and 696–711 (AKSK…EDRL). Positions 1006–1046 (PGEGHFWQVDHIKPVSGGGGQCSLDNLQTLCTVCHRERTAQ) constitute an HNH domain. An endonuclease activity region spans residues 1006–1074 (PGEGHFWQVD…SDITRFLVKK (69 aa)). Residues 1069–1073 (RFLVK) carry the APIM motif motif.

This sequence belongs to the SNF2/RAD54 helicase family. Interacts (via PIP-box and RanBP2-type zinc finger) with PCNA (when PCNA is polyubiquitinated via 'Lys-63'-linked polyubiquitin).

It is found in the nucleus. Its subcellular location is the chromosome. In terms of biological role, DNA annealing helicase and endonuclease required to maintain genome stability at stalled or collapsed replication forks by facilitating fork restart and limiting inappropriate recombination that could occur during template switching events. Recruited to the sites of stalled DNA replication by polyubiquitinated PCNA and acts as a structure-specific endonuclease that cleaves the replication fork D-loop intermediate, generating an accessible 3'-OH group in the template of the leading strand, which is amenable to extension by DNA polymerase. In addition to endonuclease activity, also catalyzes the fork regression via annealing helicase activity in order to prevent disintegration of the replication fork and the formation of double-strand breaks. This is DNA annealing helicase and endonuclease ZRANB3 (ZRANB3) from Bos taurus (Bovine).